Consider the following 369-residue polypeptide: Glutamate 5-kinase (369 aa).

K9 is an ATP binding site. Substrate-binding residues include S49, D136, and N148. Residues 168–169 (TD) and 210–216 (TGGMLTK) each bind ATP. Positions 275-355 (QGEIYVDQGA…KGVVIHRDDW (81 aa)) constitute a PUA domain.

It belongs to the glutamate 5-kinase family.

It is found in the cytoplasm. The enzyme catalyses L-glutamate + ATP = L-glutamyl 5-phosphate + ADP. Its pathway is amino-acid biosynthesis; L-proline biosynthesis; L-glutamate 5-semialdehyde from L-glutamate: step 1/2. In terms of biological role, catalyzes the transfer of a phosphate group to glutamate to form L-glutamate 5-phosphate. This is Glutamate 5-kinase from Streptococcus gordonii (strain Challis / ATCC 35105 / BCRC 15272 / CH1 / DL1 / V288).